Here is a 345-residue protein sequence, read N- to C-terminus: S-adenosylmethionine:tRNA ribosyltransferase-isomerase (345 aa).

The protein belongs to the QueA family. Monomer.

The protein resides in the cytoplasm. It catalyses the reaction 7-aminomethyl-7-carbaguanosine(34) in tRNA + S-adenosyl-L-methionine = epoxyqueuosine(34) in tRNA + adenine + L-methionine + 2 H(+). The protein operates within tRNA modification; tRNA-queuosine biosynthesis. Transfers and isomerizes the ribose moiety from AdoMet to the 7-aminomethyl group of 7-deazaguanine (preQ1-tRNA) to give epoxyqueuosine (oQ-tRNA). The protein is S-adenosylmethionine:tRNA ribosyltransferase-isomerase of Acidiphilium cryptum (strain JF-5).